The primary structure comprises 227 residues: MLVHIPNVLTPEQVSMLRDRLDRAGDAWVDGRATAGYTGAPVKRNQQIAEHSPVARELGDVILAALERNPLFISAALPNQVYPPLFNRYEGGMTFGSHVDGAVRVLPNGVKLRTDVSVTLFLSAPDEYDGGELVIEDAYGVQQVKLPAGDMIVYPATSLHQVTPVTRGVRVASFFWVQSLVRSDAQRALLFDMDTAIQRLNASGADTEACRSLVGCYHNLLRIWSET.

The region spanning Gln80–Ser179 is the Fe2OG dioxygenase domain. Fe cation-binding residues include His98, Asp100, and His160. Arg170 is a binding site for 2-oxoglutarate.

It depends on Fe(2+) as a cofactor. L-ascorbate serves as cofactor.

In Burkholderia ambifaria (strain MC40-6), this protein is PKHD-type hydroxylase BamMC406_5004.